A 257-amino-acid polypeptide reads, in one-letter code: Caspase-14 (257 aa).

Residues His93 and Cys136 contribute to the active site. Positions 156–167 are excised as a propeptide; sequence DEELGGDEVAVL.

This sequence belongs to the peptidase C14A family. Heterodimer of a large and a small subunit, both processed from the precursor; the mature active form is a p17/p10 dimer and the intermediate form a p20/p8 dimer. Maturation by proteolytic processing appears to be a two-step process. The precursor is processed by KLK7 to yield the p20/p8 intermediate form which acts the precursor to yield the p17/p10 mature form. Initially it was reported that cleavage by granzyme B, caspase-8 and -10 generates the two active subunits, however the physiological relevance has not been established. Embryo, adult liver and less in adult brain and kidney. Expressed in differentiating keratinocytes of embryonic skin (at protein level). Expressed in keratinocytes of adult skin suprabasal layers (at protein level).

The protein localises to the cytoplasm. The protein resides in the nucleus. Functionally, non-apoptotic caspase which is involved in epidermal differentiation. Seems to play a role in keratinocyte differentiation and is required for cornification. Regulates maturation of the epidermis by proteolytically processing filaggrin. In vitro is equally active on the synthetic caspase substrates WEHD-ACF and IETD-AFC. Involved in processing of prosaposin in the epidermis. May be involved in retinal pigment epithelium cell barrier function. This chain is Caspase-14 (Casp14), found in Mus musculus (Mouse).